The sequence spans 355 residues: uncharacterized protein (355 aa).

Positions 9–75 constitute a J domain; that stretch reads DYYDILNISV…KLREKYDKLG (67 aa).

It belongs to the DnaJ family.

The protein resides in the cytoplasm. This is an uncharacterized protein from Schizosaccharomyces pombe (strain 972 / ATCC 24843) (Fission yeast).